The primary structure comprises 235 residues: Calcium-activated potassium channel subunit beta-2 (235 aa).

Residues M1–D45 are ball and chain. At M1 to R46 the chain is on the cytoplasmic side. A helical transmembrane segment spans residues A47 to I67. Topologically, residues T68–N194 are extracellular. N-linked (GlcNAc...) asparagine glycosylation is found at N88, N96, and N119. The chain crosses the membrane as a helical span at residues V195–A215. Residues M216–R235 are Cytoplasmic-facing.

This sequence belongs to the KCNMB (TC 8.A.14.1) family. KCNMB2 subfamily. In terms of assembly, interacts with KCNMA1 tetramer. There are probably 4 molecules of KCMNB2 per KCNMA1 tetramer. In terms of processing, N-glycosylated. As to expression, highly expressed in brain and heart. Also expressed in lung.

The protein resides in the membrane. Functionally, regulatory subunit of the calcium activated potassium KCNMA1 (maxiK) channel. Modulates the calcium sensitivity and gating kinetics of KCNMA1, thereby contributing to KCNMA1 channel diversity. Acts as a negative regulator that confers rapid and complete inactivation of KCNMA1 channel complex. The protein is Calcium-activated potassium channel subunit beta-2 (Kcnmb2) of Rattus norvegicus (Rat).